The following is a 466-amino-acid chain: Putative outer membrane protein NMB0088 (466 aa).

The signal sequence occupies residues 1–24; that stretch reads MTPSALKKTVLLLGTAFAAASVHA.

This sequence belongs to the OmpP1/FadL family.

It is found in the cell outer membrane. In Neisseria meningitidis serogroup B (strain ATCC BAA-335 / MC58), this protein is Putative outer membrane protein NMB0088.